A 463-amino-acid polypeptide reads, in one-letter code: Myocyte-specific enhancer factor 2C (463 aa).

Positions 3 to 57 constitute an MADS-box domain; the sequence is RKKIQITRIMDERNRQVTFTKRKFGLMKKAYELSVLCDCEIALIIFNSTNKLFQY. Position 4 is an N6-acetyllysine (K4). Positions 58-86 form a DNA-binding region, mef2-type; the sequence is ASTDMDKVLLKYTEYNEPHESRTNSDIVE. S59 is subject to Phosphoserine; by CK2. Phosphoserine is present on residues S98 and S104. An N6-acetyllysine mark is found at K114 and K117. A disordered region spans residues 178–223; the sequence is NSMSPGVTHRPPSAGNTGGLMGGDLTSGAGTSAGNGYGNPRNSPGL. Phosphoserine occurs at positions 220 and 226. 2 positions are modified to N6-acetyllysine: K232 and K237. Position 238 is a phosphoserine (S238). N6-acetyllysine occurs at positions 250 and 262. Residues T283 and T290 each carry the phosphothreonine; by MAPK7 and MAPK14 modification. Residues 358 to 389 are transcription repressor; sequence ACTSTHLSQSSNLSLPSTQSLNIKSEPVSPPR. The span at 365 to 380 shows a compositional bias: polar residues; it reads SQSSNLSLPSTQSLNI. The interval 365 to 463 is disordered; the sequence is SQSSNLSLPS…RMRLSEGWAT (99 aa). A Glycyl lysine isopeptide (Lys-Gly) (interchain with G-Cter in SUMO) cross-link involves residue K381. Residue S386 is modified to Phosphoserine; by CDK5. Residue S409 is modified to Phosphoserine; by MAPK7. Positions 409–422 are enriched in low complexity; the sequence is SPVDSLSSCSSSYD. The segment covering 423–433 has biased composition (basic and acidic residues); it reads GSDREDHRNEF. S435 is modified (phosphoserine).

In terms of assembly, forms a complex with class II HDACs in undifferentiating cells. On myogenic differentiation, HDACs are released into the cytoplasm allowing MEF2s to interact with other proteins for activation. Interacts with EP300 in differentiating cells; the interaction acetylates MEF2C leading to increased DNA binding and activation. Interacts with HDAC7 and CARM1. Interacts with HDAC4, HDAC7 and HDAC9; the interaction with HDACs represses transcriptional activity. Interacts with LPIN1. Interacts with MYOCD. Interacts with AKAP13. Interacts with FOXK1; the interaction inhibits MEF2C transactivation activity. Interacts (via N-terminus) with HABP4; this interaction decreases DNA-binding activity of MEF2C in myocardial cells in response to mechanical stress. Interacts with JPH2; interaction specifically takes place with the Junctophilin-2 N-terminal fragment cleavage product of JPH2. Interacts (via MADS box) with SOX18. Interacts with PHF7; the interaction promotes MEF2C binding to its transcription targets. Phosphorylated on Ser-59; which enhances DNA binding activity. Phosphorylated on Ser-386; which is required for Lys-381 sumoylation and inhibits transcriptional activity. In terms of processing, acetylated by p300 on several sites in diffentiating myocytes. Acetylation on Lys-4 increases DNA binding and transactivation. Post-translationally, sumoylated on Lys-381 with SUMO2 but not SUMO1; which represses transcriptional activity. Proteolytically cleaved in cerebellar granule neurons on several sites by caspase 3 and caspase 7 following neurotoxicity. Preferentially cleaves the CDK5-mediated hyperphosphorylated form which leads to neuron apoptosis and transcriptional inactivation.

It is found in the nucleus. Its subcellular location is the cytoplasm. The protein resides in the sarcoplasm. Functionally, transcription activator which binds specifically to the MEF2 element present in the regulatory regions of many muscle-specific genes. Controls cardiac morphogenesis and myogenesis, and is also involved in vascular development. Enhances transcriptional activation mediated by SOX18. Plays an essential role in hippocampal-dependent learning and memory by suppressing the number of excitatory synapses and thus regulating basal and evoked synaptic transmission. Crucial for normal neuronal development, distribution, and electrical activity in the neocortex. Necessary for proper development of megakaryocytes and platelets and for bone marrow B-lymphopoiesis. Required for B-cell survival and proliferation in response to BCR stimulation, efficient IgG1 antibody responses to T-cell-dependent antigens and for normal induction of germinal center B-cells. May also be involved in neurogenesis and in the development of cortical architecture. This Sus scrofa (Pig) protein is Myocyte-specific enhancer factor 2C.